Consider the following 65-residue polypeptide: Dybowskin-2CDYa (65 aa).

The first 22 residues, 1-22, serve as a signal peptide directing secretion; sequence MFTLKKSLLLLFFIGVIKLSLC. Residues 23–47 constitute a propeptide that is removed on maturation; the sequence is EEERNADDDERRDDPDEMDVEVENR. The span at 26-43 shows a compositional bias: acidic residues; that stretch reads RNADDDERRDDPDEMDVE. Residues 26 to 65 form a disordered region; sequence RNADDDERRDDPDEMDVEVENRSAVGRHGRRFGLRKHRKH. The segment covering 50-65 has biased composition (basic residues); sequence VGRHGRRFGLRKHRKH.

Belongs to the frog skin active peptide (FSAP) family. Brevinin subfamily. As to expression, expressed by the skin glands.

The protein localises to the secreted. In terms of biological role, antimicrobial peptide. Has activity against the Gram-positive bacterium S.aureus (MIC=6 uM) and the Gram-negative bacterium E.coli (MIC=3 uM). Lacks hemolytic activity against human erythrocytes. In Rana dybowskii (Dybovsky's frog), this protein is Dybowskin-2CDYa.